The following is a 248-amino-acid chain: Phosphatidylglycerol--prolipoprotein diacylglyceryl transferase (248 aa).

The next 3 membrane-spanning stretches (helical) occupy residues 6-26 (FSIF…GVIL), 48-68 (ILVW…VIFE), and 84-104 (GGGL…YVIC). R130 lines the a 1,2-diacyl-sn-glycero-3-phospho-(1'-sn-glycerol) pocket. Helical transmembrane passes span 187–207 (GQIT…VEGL) and 214–234 (IGAL…GVIL).

Belongs to the Lgt family.

The protein resides in the cell membrane. It carries out the reaction L-cysteinyl-[prolipoprotein] + a 1,2-diacyl-sn-glycero-3-phospho-(1'-sn-glycerol) = an S-1,2-diacyl-sn-glyceryl-L-cysteinyl-[prolipoprotein] + sn-glycerol 1-phosphate + H(+). Its pathway is protein modification; lipoprotein biosynthesis (diacylglyceryl transfer). Catalyzes the transfer of the diacylglyceryl group from phosphatidylglycerol to the sulfhydryl group of the N-terminal cysteine of a prolipoprotein, the first step in the formation of mature lipoproteins. This is Phosphatidylglycerol--prolipoprotein diacylglyceryl transferase from Finegoldia magna (strain ATCC 29328 / DSM 20472 / WAL 2508) (Peptostreptococcus magnus).